Here is a 363-residue protein sequence, read N- to C-terminus: Small ribosomal subunit biogenesis GTPase RsgA (363 aa).

In terms of domain architecture, CP-type G spans 112–268 (HQQVIAANID…LIDTPGMREL (157 aa)). GTP-binding positions include 157 to 160 (TKAD) and 210 to 218 (GSSGAGKST). 4 residues coordinate Zn(2+): C291, C296, H298, and C304. The interval 340-363 (RVAQNNRGKGSGKRPASIDRPGRR) is disordered.

It belongs to the TRAFAC class YlqF/YawG GTPase family. RsgA subfamily. In terms of assembly, monomer. Associates with 30S ribosomal subunit, binds 16S rRNA. Zn(2+) serves as cofactor.

It is found in the cytoplasm. One of several proteins that assist in the late maturation steps of the functional core of the 30S ribosomal subunit. Helps release RbfA from mature subunits. May play a role in the assembly of ribosomal proteins into the subunit. Circularly permuted GTPase that catalyzes slow GTP hydrolysis, GTPase activity is stimulated by the 30S ribosomal subunit. In Xanthomonas oryzae pv. oryzae (strain MAFF 311018), this protein is Small ribosomal subunit biogenesis GTPase RsgA.